A 439-amino-acid chain; its full sequence is Serine/threonine-protein kinase 2 (439 aa).

Residues 87–439 (NDDFYHISTG…IFSDWINGGN (353 aa)) enclose the Protein kinase domain. ATP-binding positions include 93 to 101 (ISTGGYGIV) and Lys117. Asp307 serves as the catalytic Proton acceptor.

It belongs to the protein kinase superfamily. Ser/Thr protein kinase family. In terms of processing, phosphorylated in vivo. Autophosphorylated in vitro.

Its subcellular location is the host endoplasmic reticulum. The protein localises to the host endoplasmic reticulum-Golgi intermediate compartment. It carries out the reaction L-seryl-[protein] + ATP = O-phospho-L-seryl-[protein] + ADP + H(+). It catalyses the reaction L-threonyl-[protein] + ATP = O-phospho-L-threonyl-[protein] + ADP + H(+). Functionally, essential serine-protein kinase involved in the early stage of virion morphogenesis. The sequence is that of Serine/threonine-protein kinase 2 (OPG054) from Bos taurus (Bovine).